The primary structure comprises 430 residues: Adenylosuccinate synthetase (430 aa).

GTP is bound by residues 12–18 and 40–42; these read GDEGKGK and GHT. The Proton acceptor role is filled by aspartate 13. Aspartate 13 and glycine 40 together coordinate Mg(2+). Residues 13–16, 38–41, threonine 128, arginine 142, glutamine 223, threonine 238, and arginine 302 contribute to the IMP site; these read DEGK and NAGH. The Proton donor role is filled by histidine 41. 298-304 is a substrate binding site; it reads TTTGRPR. Residues arginine 304, 330-332, and 412-414 each bind GTP; these read SID and SVG.

It belongs to the adenylosuccinate synthetase family. In terms of assembly, homodimer. Requires Mg(2+) as cofactor.

Its subcellular location is the cytoplasm. The catalysed reaction is IMP + L-aspartate + GTP = N(6)-(1,2-dicarboxyethyl)-AMP + GDP + phosphate + 2 H(+). It participates in purine metabolism; AMP biosynthesis via de novo pathway; AMP from IMP: step 1/2. Functionally, plays an important role in the de novo pathway of purine nucleotide biosynthesis. Catalyzes the first committed step in the biosynthesis of AMP from IMP. The sequence is that of Adenylosuccinate synthetase from Streptococcus agalactiae serotype Ia (strain ATCC 27591 / A909 / CDC SS700).